Reading from the N-terminus, the 550-residue chain is Tyrosinase HcTyr2 (550 aa).

Residues His56, His84, His93, His282, His286, and His326 each contribute to the Cu cation site.

It belongs to the tyrosinase family. It depends on Cu(2+) as a cofactor.

It catalyses the reaction L-tyrosine + O2 = L-dopaquinone + H2O. The catalysed reaction is 2 L-tyrosine + O2 = 2 L-dopa. The enzyme catalyses 2 L-dopa + O2 = 2 L-dopaquinone + 2 H2O. Copper-containing oxidase that catalyzes the conversion of L-tyrosine to L-dopa and then to L-dopaquinone. Can use various phenols such as p-coumaric acid, phenol, pyrocatechol, syringol or pyrogallol. Accepts several of the constituents of lignin and potentially participates in lignin functionalization. The protein is Tyrosinase HcTyr2 of Hahella sp. (strain CCB-MM4).